Here is a 195-residue protein sequence, read N- to C-terminus: MSRNLFLSITNFIRNLESLFLPHGGHPPALALAGFQHDHSPKSSQEFSLKQLIGDGLLWAVPKHRRSVEKRLKRKFGYPEYNWKPLREKRNLRSCLQCGHDHEMGVLCPFCYQKVLKETELMQSKIQETLGLDPVDKEVIVLYEGEKAEQSTDDLKNKRIVEMKKPRPMWFTKNLLQKSTQQLSETKEVKPSDLA.

The Zn(2+) site is built by C95, C98, C108, and C111.

It belongs to the bacterial ribosomal protein bL32 family. In terms of assembly, component of the mitochondrial large ribosomal subunit (mt-LSU).

The protein resides in the mitochondrion. In terms of biological role, component of the mitochondrial large ribosomal subunit (mt-LSU). The mitochondrial ribosome (mitoribosome) is a large ribonucleoprotein complex responsible for the synthesis of proteins inside mitochondria. The protein is Large ribosomal subunit protein bL32m (mRpL32) of Drosophila melanogaster (Fruit fly).